A 357-amino-acid chain; its full sequence is Arginine kinase Scy p 2.0101 (357 aa).

The 83-residue stretch at 9-91 (KLEEGFKKLE…FDPIIEDYHK (83 aa)) folds into the Phosphagen kinase N-terminal domain. Residue 64–68 (GVGVY) coordinates L-arginine. IgE-binding and beta-hexosaminidase release from rat basophilic leukemia (RBL) cells regions lie at residues 113–127 (VDPD…RVRC) and 127–155 (CGRS…VSST). Residues 119-356 (FVISTRVRCG…LELIKIEKEM (238 aa)) form the Phosphagen kinase C-terminal domain. 122–126 (STRVR) lines the ATP pocket. His-185 is a binding site for ATP. A disulfide bridge links Cys-201 with Cys-271. The tract at residues 204 to 218 (WPTGRGIYHNDNKTF) is igE-binding and beta-hexosaminidase release from rat basophilic leukemia (RBL) cells. The segment at 211-225 (YHNDNKTFLVWCNEE) is igE-binding, but no beta-hexosaminidase release from rat basophilic leukemia (RBL) cells. An L-arginine-binding site is contributed by Glu-225. Arg-229 contributes to the ATP binding site. Cys-271 provides a ligand contact to L-arginine. ATP contacts are provided by residues 280–284 (RASVH) and 309–314 (RGTRGE). An L-arginine-binding site is contributed by Glu-314. Residues 316 to 330 (TEAEGGVYDISNKRR) are igE-binding, but no beta-hexosaminidase release from rat basophilic leukemia (RBL) cells.

It belongs to the ATP:guanido phosphotransferase family. Post-translationally, glycosylated. In terms of tissue distribution, muscle (at protein level).

It catalyses the reaction L-arginine + ATP = N(omega)-phospho-L-arginine + ADP + H(+). Functionally, catalyzes the reversible transfer of high energy ATP gamma-phosphate group to L-arginine. The protein is Arginine kinase Scy p 2.0101 of Scylla paramamosain (Mud crab).